The primary structure comprises 263 residues: Tryptophan synthase alpha chain (263 aa).

Residues E51 and D62 each act as proton acceptor in the active site.

This sequence belongs to the TrpA family. Tetramer of two alpha and two beta chains.

The enzyme catalyses (1S,2R)-1-C-(indol-3-yl)glycerol 3-phosphate + L-serine = D-glyceraldehyde 3-phosphate + L-tryptophan + H2O. It participates in amino-acid biosynthesis; L-tryptophan biosynthesis; L-tryptophan from chorismate: step 5/5. Its function is as follows. The alpha subunit is responsible for the aldol cleavage of indoleglycerol phosphate to indole and glyceraldehyde 3-phosphate. The sequence is that of Tryptophan synthase alpha chain from Methanosarcina barkeri (strain Fusaro / DSM 804).